The sequence spans 360 residues: MDVMDDVKSVLCLKALEASNERASDCIQRAGASIRKIPRIPSIIRVKKKYSTFRVLTDTSHDLLVLVNEGFSDGEYVPINVELELCYEYFTYSEVLRRILPEEVQTPSSFEIVGSIVHLNLDGEQMKHKNIIGRVVHDKTGKTVITKIGQISNAYRSFDLEVIGGDPVLETIHREGDILFCIDYRSVYWCSKLQSERAILAGKFKAGEVLCDPFCGVGPVSLPALKKGCRVYSNDLNLRAIECLEKSIKINRLDPRNIEIFNLSANEFLEKMAGRKIDHFFLNLPEHSLDYLRRISAWEGNPLVHCYFFCRSNEDVVQYIFSRTGLRVDPGMLKVVRKVSPSKYMYKLETSSLFLRRGLG.

Residues R197, 235–236 (DL), and N283 each bind S-adenosyl-L-methionine.

Belongs to the class I-like SAM-binding methyltransferase superfamily. TRM5/TYW2 family. In terms of assembly, monomer.

It is found in the mitochondrion matrix. The protein resides in the nucleus. The protein localises to the cytoplasm. It catalyses the reaction guanosine(37) in tRNA + S-adenosyl-L-methionine = N(1)-methylguanosine(37) in tRNA + S-adenosyl-L-homocysteine + H(+). Its function is as follows. Specifically methylates the N1 position of guanosine-37 in various cytoplasmic and mitochondrial tRNAs. Methylation is not dependent on the nature of the nucleoside 5' of the target nucleoside. This is the first step in the biosynthesis of wybutosine (yW), a modified base adjacent to the anticodon of tRNAs and required for accurate decoding. This Encephalitozoon cuniculi (strain GB-M1) (Microsporidian parasite) protein is tRNA (guanine(37)-N(1))-methyltransferase.